Reading from the N-terminus, the 199-residue chain is NAD(P)H dehydrogenase (quinone) (199 aa).

Positions M4–V190 constitute a Flavodoxin-like domain. Residues S10 to M15 and T78 to Y80 contribute to the FMN site. Residue Y12 coordinates NAD(+). W98 is a binding site for substrate. FMN-binding positions include S113–G119 and H134. The disordered stretch occupies residues G158–D181. The span at M163–A177 shows a compositional bias: polar residues.

Belongs to the WrbA family. The cofactor is FMN.

The catalysed reaction is a quinone + NADH + H(+) = a quinol + NAD(+). The enzyme catalyses a quinone + NADPH + H(+) = a quinol + NADP(+). This is NAD(P)H dehydrogenase (quinone) from Brucella abortus (strain S19).